The primary structure comprises 587 residues: Dynein axonemal intermediate chain 2 (587 aa).

WD repeat units follow at residues 214–254, 261–302, 362–401, and 405–445; these read RPAS…NPVE, SHRD…EPTE, GHHGPIYSIQRNPFFPKNFLTVGDWTARIWSEDCRESSIM, and YHTS…NNPS. Disordered regions lie at residues 519 to 542 and 562 to 587; these read LKERSKAEPGEEVKDEKPAEDMKE and KEQQEIKQSEDEHQEKEVSEEKIVHE.

Belongs to the dynein intermediate chain family. As to quaternary structure, consists of at least two heavy chains and a number of intermediate and light chains. Interacts with DNAAF2. Interacts with DNAAF6/PIH1D3. Interacts with HEATR2; probably involved in outer arm dynein assembly. Interacts with C16ORF71/DAAP1.

It is found in the cytoplasm. Its subcellular location is the cytoskeleton. The protein resides in the cilium axoneme. It localises to the dynein axonemal particle. In terms of biological role, part of the dynein complex of multiciliated cell cilia. This chain is Dynein axonemal intermediate chain 2 (dnai2), found in Xenopus laevis (African clawed frog).